The chain runs to 445 residues: Adenylosuccinate synthetase (445 aa).

GTP-binding positions include Gly24–Lys30 and Gly52–Thr54. Catalysis depends on Asp25, which acts as the Proton acceptor. Positions 25 and 52 each coordinate Mg(2+). IMP contacts are provided by residues Asp25 to Lys28, Asn50 to His53, Thr147, Arg161, Asn238, Thr253, and Arg317. Residue His53 is the Proton donor of the active site. Residue Thr313 to Arg319 participates in substrate binding. GTP-binding positions include Arg319, Lys345–Asp347, and Gly427–Gly429.

Belongs to the adenylosuccinate synthetase family. Homodimer. Mg(2+) serves as cofactor.

It is found in the cytoplasm. The catalysed reaction is IMP + L-aspartate + GTP = N(6)-(1,2-dicarboxyethyl)-AMP + GDP + phosphate + 2 H(+). It functions in the pathway purine metabolism; AMP biosynthesis via de novo pathway; AMP from IMP: step 1/2. Its function is as follows. Plays an important role in the de novo pathway and in the salvage pathway of purine nucleotide biosynthesis. Catalyzes the first committed step in the biosynthesis of AMP from IMP. The sequence is that of Adenylosuccinate synthetase from Malassezia globosa (strain ATCC MYA-4612 / CBS 7966) (Dandruff-associated fungus).